The chain runs to 490 residues: ATP synthase subunit beta, chloroplastic (490 aa).

An ATP-binding site is contributed by 169-176 (GGAGVGKT).

Belongs to the ATPase alpha/beta chains family. As to quaternary structure, F-type ATPases have 2 components, CF(1) - the catalytic core - and CF(0) - the membrane proton channel. CF(1) has five subunits: alpha(3), beta(3), gamma(1), delta(1), epsilon(1). CF(0) has four main subunits: a(1), b(1), b'(1) and c(9-12).

It localises to the plastid. The protein localises to the chloroplast thylakoid membrane. It catalyses the reaction ATP + H2O + 4 H(+)(in) = ADP + phosphate + 5 H(+)(out). Its function is as follows. Produces ATP from ADP in the presence of a proton gradient across the membrane. The catalytic sites are hosted primarily by the beta subunits. The protein is ATP synthase subunit beta, chloroplastic of Cyanidium caldarium (Red alga).